We begin with the raw amino-acid sequence, 547 residues long: Chaperonin GroEL (547 aa).

Residues Thr30–Pro33, Lys51, Asp87–Thr91, Gly415, Asn479–Ala481, and Asp495 contribute to the ATP site.

The protein belongs to the chaperonin (HSP60) family. In terms of assembly, forms a cylinder of 14 subunits composed of two heptameric rings stacked back-to-back. Interacts with the co-chaperonin GroES.

The protein resides in the cytoplasm. It carries out the reaction ATP + H2O + a folded polypeptide = ADP + phosphate + an unfolded polypeptide.. Together with its co-chaperonin GroES, plays an essential role in assisting protein folding. The GroEL-GroES system forms a nano-cage that allows encapsulation of the non-native substrate proteins and provides a physical environment optimized to promote and accelerate protein folding. This chain is Chaperonin GroEL, found in Pseudomonas fluorescens (strain ATCC BAA-477 / NRRL B-23932 / Pf-5).